A 588-amino-acid chain; its full sequence is Histone-arginine methyltransferase CARM1 (588 aa).

Residues 120–427 (AVQYFQFYGY…KRQSYDISIV (308 aa)) enclose the SAM-dependent MTase PRMT-type domain. The S-adenosyl-L-methionine site is built by Gln-133, Arg-142, Gly-166, Glu-188, Glu-217, and Ser-245. The transactivation domain stretch occupies residues 473–588 (TGGTYSMSQG…IPSNTMHYGS (116 aa)).

Belongs to the class I-like SAM-binding methyltransferase superfamily. Protein arginine N-methyltransferase family. As to quaternary structure, homodimer.

It localises to the nucleus. The protein localises to the cytoplasm. The protein resides in the chromosome. It catalyses the reaction L-arginyl-[protein] + 2 S-adenosyl-L-methionine = N(omega),N(omega)-dimethyl-L-arginyl-[protein] + 2 S-adenosyl-L-homocysteine + 2 H(+). Functionally, methylates (mono- and asymmetric dimethylation) the guanidino nitrogens of arginyl residues in several proteins involved in DNA packaging, transcription regulation, pre-mRNA splicing, and mRNA stability. Recruited to promoters upon gene activation together with histone acetyltransferases from EP300/P300 and p160 families, methylates histone H3 at 'Arg-17' (H3R17me) and activates transcription via chromatin remodeling. The chain is Histone-arginine methyltransferase CARM1 (carm1) from Danio rerio (Zebrafish).